Consider the following 315-residue polypeptide: tRNA-dihydrouridine(16) synthase (315 aa).

Residues 7 to 9 (PME) and glutamine 68 contribute to the FMN site. The active-site Proton donor is cysteine 98. FMN is bound by residues lysine 139, 199–201 (NGE), and 223–224 (GR).

It belongs to the Dus family. DusC subfamily. FMN is required as a cofactor.

It catalyses the reaction 5,6-dihydrouridine(16) in tRNA + NADP(+) = uridine(16) in tRNA + NADPH + H(+). The enzyme catalyses 5,6-dihydrouridine(16) in tRNA + NAD(+) = uridine(16) in tRNA + NADH + H(+). Functionally, catalyzes the synthesis of 5,6-dihydrouridine (D), a modified base found in the D-loop of most tRNAs, via the reduction of the C5-C6 double bond in target uridines. Specifically modifies U16 in tRNAs. The chain is tRNA-dihydrouridine(16) synthase from Aquipseudomonas alcaligenes (Pseudomonas alcaligenes).